Reading from the N-terminus, the 60-residue chain is UPF0434 protein YcaR (60 aa).

The protein belongs to the UPF0434 family.

The sequence is that of UPF0434 protein YcaR from Escherichia fergusonii (strain ATCC 35469 / DSM 13698 / CCUG 18766 / IAM 14443 / JCM 21226 / LMG 7866 / NBRC 102419 / NCTC 12128 / CDC 0568-73).